Consider the following 451-residue polypeptide: uncharacterized protein (451 aa).

Positions 415 to 435 are disordered; sequence AHGDTEWLPPPHLDHGQPRVN.

This sequence belongs to the Rv1128c/1148c/1588c/1702c/1945/3466 family.

This is an uncharacterized protein from Mycobacterium tuberculosis (strain ATCC 25618 / H37Rv).